A 346-amino-acid polypeptide reads, in one-letter code: Holliday junction branch migration complex subunit RuvB (346 aa).

Residues 1 to 181 (MSDRNPLIDA…FGIPVRLNFY (181 aa)) are large ATPase domain (RuvB-L). Residues Leu20, Arg21, Gly62, Lys65, Thr66, Thr67, 128 to 130 (EDF), Arg171, Tyr181, and Arg218 each bind ATP. Mg(2+) is bound at residue Thr66. The tract at residues 182–252 (TVEELEYIVR…IADEALSRLE (71 aa)) is small ATPAse domain (RuvB-S). Residues 255-346 (NRGLDQLDRR…SQYGLFMEDE (92 aa)) form a head domain (RuvB-H) region. Positions 291, 310, and 315 each coordinate DNA.

The protein belongs to the RuvB family. In terms of assembly, homohexamer. Forms an RuvA(8)-RuvB(12)-Holliday junction (HJ) complex. HJ DNA is sandwiched between 2 RuvA tetramers; dsDNA enters through RuvA and exits via RuvB. An RuvB hexamer assembles on each DNA strand where it exits the tetramer. Each RuvB hexamer is contacted by two RuvA subunits (via domain III) on 2 adjacent RuvB subunits; this complex drives branch migration. In the full resolvosome a probable DNA-RuvA(4)-RuvB(12)-RuvC(2) complex forms which resolves the HJ.

The protein resides in the cytoplasm. It catalyses the reaction ATP + H2O = ADP + phosphate + H(+). Its function is as follows. The RuvA-RuvB-RuvC complex processes Holliday junction (HJ) DNA during genetic recombination and DNA repair, while the RuvA-RuvB complex plays an important role in the rescue of blocked DNA replication forks via replication fork reversal (RFR). RuvA specifically binds to HJ cruciform DNA, conferring on it an open structure. The RuvB hexamer acts as an ATP-dependent pump, pulling dsDNA into and through the RuvAB complex. RuvB forms 2 homohexamers on either side of HJ DNA bound by 1 or 2 RuvA tetramers; 4 subunits per hexamer contact DNA at a time. Coordinated motions by a converter formed by DNA-disengaged RuvB subunits stimulates ATP hydrolysis and nucleotide exchange. Immobilization of the converter enables RuvB to convert the ATP-contained energy into a lever motion, pulling 2 nucleotides of DNA out of the RuvA tetramer per ATP hydrolyzed, thus driving DNA branch migration. The RuvB motors rotate together with the DNA substrate, which together with the progressing nucleotide cycle form the mechanistic basis for DNA recombination by continuous HJ branch migration. Branch migration allows RuvC to scan DNA until it finds its consensus sequence, where it cleaves and resolves cruciform DNA. In Brucella melitensis biotype 2 (strain ATCC 23457), this protein is Holliday junction branch migration complex subunit RuvB.